The following is a 90-amino-acid chain: Small ribosomal subunit protein uS15c (90 aa).

It belongs to the universal ribosomal protein uS15 family. Part of the 30S ribosomal subunit.

Its subcellular location is the plastid. It is found in the chloroplast. In Lolium perenne (Perennial ryegrass), this protein is Small ribosomal subunit protein uS15c (rps15-A).